The primary structure comprises 278 residues: MDVRQSIHSAHAKTLDTQGLRNEFLVEEVFVADEYTMVYSHIDRIIVGGIMPITKTVSVGGEVGKQLGVSYFLERRELGVINIGGAGTITVDGQCYEIGHRDALYVGKGAKEVVFASIDTATPAKFYYNCAPAHTTYPTKKVTPDEVSPVTLGDNLTSNRRTINKYFVPDVLETCQLSMGLTELAPGNLWNTMPCHTHERRMEVYFYFNMDDDACVFHMMGQPQETRHIVMHNEQAVISPSWSIHSGVGTKAYTFIWGMVGENQVFDDMDHVAVKDLR.

The Zn(2+) site is built by His196, His198, Glu203, and His245.

The protein belongs to the KduI family. In terms of assembly, homohexamer. Zn(2+) is required as a cofactor.

The enzyme catalyses 5-dehydro-4-deoxy-D-glucuronate = 3-deoxy-D-glycero-2,5-hexodiulosonate. Its pathway is glycan metabolism; pectin degradation; 2-dehydro-3-deoxy-D-gluconate from pectin: step 4/5. Functionally, catalyzes the isomerization of 5-dehydro-4-deoxy-D-glucuronate to 3-deoxy-D-glycero-2,5-hexodiulosonate. The polypeptide is 4-deoxy-L-threo-5-hexosulose-uronate ketol-isomerase (Escherichia coli (strain 55989 / EAEC)).